The following is a 387-amino-acid chain: Probable inactive shikimate kinase like 2, chloroplastic (387 aa).

The transit peptide at 1 to 71 directs the protein to the chloroplast; the sequence is MAAFASGLAI…FNSFSCNCLS (71 aa). The segment at 368 to 387 is disordered; that stretch reads NIKPPGWDPSSDTGPHPQFT.

This sequence belongs to the shikimate kinase family.

The protein resides in the plastid. Its subcellular location is the chloroplast. In Arabidopsis thaliana (Mouse-ear cress), this protein is Probable inactive shikimate kinase like 2, chloroplastic (SKL2).